The sequence spans 114 residues: MSVQTAVPIEFSDAAARKVKALVEEEENPNLKLRVYVTGGGCSGFQYGFTFDEKVNDGDTTIDKDQVTLVVDPMSLQYLLGGEVDYTEGLEGSRFLVNNPNATTTCGCGASFTV.

Iron-sulfur cluster is bound by residues C42, C106, and C108.

Belongs to the HesB/IscA family. Homodimer. The cofactor is iron-sulfur cluster.

Functionally, required for insertion of 4Fe-4S clusters for at least IspG. This chain is Iron-sulfur cluster insertion protein ErpA, found in Pseudoalteromonas atlantica (strain T6c / ATCC BAA-1087).